Consider the following 566-residue polypeptide: Proline--tRNA ligase (566 aa).

Belongs to the class-II aminoacyl-tRNA synthetase family. ProS type 1 subfamily. In terms of assembly, homodimer.

It localises to the cytoplasm. The catalysed reaction is tRNA(Pro) + L-proline + ATP = L-prolyl-tRNA(Pro) + AMP + diphosphate. Catalyzes the attachment of proline to tRNA(Pro) in a two-step reaction: proline is first activated by ATP to form Pro-AMP and then transferred to the acceptor end of tRNA(Pro). As ProRS can inadvertently accommodate and process non-cognate amino acids such as alanine and cysteine, to avoid such errors it has two additional distinct editing activities against alanine. One activity is designated as 'pretransfer' editing and involves the tRNA(Pro)-independent hydrolysis of activated Ala-AMP. The other activity is designated 'posttransfer' editing and involves deacylation of mischarged Ala-tRNA(Pro). The misacylated Cys-tRNA(Pro) is not edited by ProRS. This chain is Proline--tRNA ligase, found in Bacillus cereus (strain AH187).